The chain runs to 81 residues: Elicitor peptide 4 (81 aa).

A propeptide spanning residues 1–54 (MERGVSYYLWIPFKFIHQTFGSLLLKLLGLRSPSDHSFPEDGEEEVKVVEVSSR) is cleaved from the precursor. Residues 57–81 (PGKKNVLKKSRESSGKPGGTNKKPF) are disordered.

The protein belongs to the brassicaceae elicitor peptide family.

Functionally, elicitor of plant defense. The polypeptide is Elicitor peptide 4 (PEP4) (Arabidopsis thaliana (Mouse-ear cress)).